Consider the following 274-residue polypeptide: Rhamnulose-1-phosphate aldolase (274 aa).

Residue glutamate 117 is part of the active site. Residues histidine 141, histidine 143, and histidine 212 each coordinate Zn(2+).

It belongs to the aldolase class II family. RhaD subfamily. In terms of assembly, homotetramer. Requires Zn(2+) as cofactor.

It is found in the cytoplasm. It carries out the reaction L-rhamnulose 1-phosphate = (S)-lactaldehyde + dihydroxyacetone phosphate. Its pathway is carbohydrate degradation; L-rhamnose degradation; glycerone phosphate from L-rhamnose: step 3/3. In terms of biological role, catalyzes the reversible cleavage of L-rhamnulose-1-phosphate to dihydroxyacetone phosphate (DHAP) and L-lactaldehyde. This is Rhamnulose-1-phosphate aldolase from Escherichia coli (strain SE11).